The primary structure comprises 736 residues: Epithelial splicing regulatory protein 2 (736 aa).

RRM domains are found at residues 224-301, 325-405, and 659-736; these read TVIR…KATG, MIIR…RSTA, and ALVR…ACCE.

The protein belongs to the ESRP family.

It localises to the nucleus. Functionally, mRNA splicing factor that regulates the formation of epithelial cell-specific isoforms. Specifically regulates the expression of FGFR2-IIIb, an epithelial cell-specific isoform of fgfr2. Acts by directly binding specific sequences in mRNAs. Binds the GU-rich sequence motifs in the ISE/ISS-3, a cis-element regulatory region present in the mRNA of fgfr2. This chain is Epithelial splicing regulatory protein 2 (esrp2), found in Danio rerio (Zebrafish).